Consider the following 185-residue polypeptide: Prenylated Rab acceptor protein 1 (185 aa).

Residues 1–78 are Cytoplasmic-facing; that stretch reads MAVEKDQQKD…RNVEYYQSNY (78 aa). The tract at residues 30 to 54 is required for interaction with prenylated RAB3A and VAMP2; the sequence is AGREWLERRRATIRSWGSFVDQRRF. The next 2 membrane-spanning stretches (helical) occupy residues 79–94 and 95–112; these read VFVF…ATSP and MLLV…ILYL. Topologically, residues 113-131 are cytoplasmic; the sequence is RTLQSKFVLFGREVSPAHQ. A run of 2 helical transmembrane segments spans residues 132 to 148 and 149 to 165; these read YALA…LAGA and GSAV…VIGS. The interval 165–185 is required for interaction with GDI1; it reads SHAAFHQIEAVDGEELQMEPV. Residues 166–185 lie on the Cytoplasmic side of the membrane; that stretch reads HAAFHQIEAVDGEELQMEPV. A required for interaction with prenylated RAB3A and VAMP2 region spans residues 175–185; sequence VDGEELQMEPV. Residues 175–185 form a homodimerization region; sequence VDGEELQMEPV.

This sequence belongs to the PRA1 family. Homodimer. Interacts with VAMP2 (synaptobrevin-2), prenylated Rab proteins, GDI1, NDRG1 and PCLO.

The protein resides in the cell membrane. It localises to the cytoplasm. It is found in the golgi apparatus. The protein localises to the cytoplasmic vesicle. Its subcellular location is the secretory vesicle. The protein resides in the synaptic vesicle. General Rab protein regulator required for vesicle formation from the Golgi complex. May control vesicle docking and fusion by mediating the action of Rab GTPases to the SNARE complexes. In addition it inhibits the removal of Rab GTPases from the membrane by GDI1. The chain is Prenylated Rab acceptor protein 1 (RABAC1) from Bos taurus (Bovine).